Consider the following 369-residue polypeptide: Anhydro-N-acetylmuramic acid kinase (369 aa).

Position 12 to 19 (12 to 19 (GTSLDGVD)) interacts with ATP.

It belongs to the anhydro-N-acetylmuramic acid kinase family.

The enzyme catalyses 1,6-anhydro-N-acetyl-beta-muramate + ATP + H2O = N-acetyl-D-muramate 6-phosphate + ADP + H(+). Its pathway is amino-sugar metabolism; 1,6-anhydro-N-acetylmuramate degradation. It participates in cell wall biogenesis; peptidoglycan recycling. Catalyzes the specific phosphorylation of 1,6-anhydro-N-acetylmuramic acid (anhMurNAc) with the simultaneous cleavage of the 1,6-anhydro ring, generating MurNAc-6-P. Is required for the utilization of anhMurNAc either imported from the medium or derived from its own cell wall murein, and thus plays a role in cell wall recycling. This Escherichia coli (strain K12 / MC4100 / BW2952) protein is Anhydro-N-acetylmuramic acid kinase.